Here is a 1193-residue protein sequence, read N- to C-terminus: Sperm-associated antigen 5 (1193 aa).

Residues 1–48 (MWRVKKLSLSLSPSPQTGKPSMRTPLRELTLQPGALTNSGKRSPACSS) form a disordered region. Phosphoserine occurs at positions 12, 14, 43, 62, and 66. Polar residues predominate over residues 35–48 (ALTNSGKRSPACSS). The segment at 96-117 (ESDEQPLDPIPQISSTPKTSEE) is disordered. At threonine 111 the chain carries Phosphothreonine; by GSK3-beta. Phosphoserine occurs at positions 135, 159, and 334. Threonine 336 carries the post-translational modification Phosphothreonine. Phosphoserine occurs at positions 341, 353, and 362. Residues 390 to 405 (PSAPQEKSTNTSQTGL) show a composition bias toward polar residues. The tract at residues 390–416 (PSAPQEKSTNTSQTGLVGTKHSTSETE) is disordered. The interaction with KNSTRN stretch occupies residues 482 to 850 (NKLQHLKESH…LKDTVENLTA (369 aa)). Coiled-coil stretches lie at residues 545–608 (CCFD…SMRE) and 759–868 (QLTQ…EKTR). Phosphothreonine; by GSK3-beta is present on threonine 937. Residue serine 974 is modified to Phosphoserine; by GSK3-beta. Residue threonine 978 is modified to Phosphothreonine; by GSK3-beta. A coiled-coil region spans residues 979–1174 (ELQSLCSLLQ…VQHIYKTLLS (196 aa)).

In terms of assembly, homodimer, with a globular head domain and a long stalk. Homooligomer; the globular head domains associate, resulting in aster-like structures. Binds to microtubules in the mitotic spindle. Interacts with DCLRE1B/Apollo. Part of an astrin (SPAG5)-kinastrin (SKAP) complex containing KNSTRN, SPAG5, PLK1, DYNLL1 and SGO2. Interacts with KNSTRN. Interacts with RPTOR; this interaction competes with RPTOR binding to MTOR, resulting in decreased mTORC1 formation. Interacts with G3BP1. The complex formed with G3BP1 AND RPTOR is increased by oxidative stress. Interacts with OSBPL8, PCM1 and CDK5RAP2. Interacts (via C-terminus) with NUMA1 (via C-terminus); this interaction promotes the recruitment of SPAG5 to the microtubules at spindle poles in a dynein-dynactin-dependent manner. Interacts with DYNLL1. Post-translationally, phosphorylated by AURKA. Highly expressed in testis. Detected at low levels in placenta, liver, pancreas, thymus and colon.

The protein localises to the cytoplasm. It localises to the cytoskeleton. Its subcellular location is the spindle. It is found in the spindle pole. The protein resides in the chromosome. The protein localises to the centromere. It localises to the kinetochore. Its subcellular location is the midbody. It is found in the microtubule organizing center. The protein resides in the centrosome. The protein localises to the cytoplasmic granule. It localises to the centriolar satellite. Functionally, essential component of the mitotic spindle required for normal chromosome segregation and progression into anaphase. Required for chromosome alignment, normal timing of sister chromatid segregation, and maintenance of spindle pole architecture. In complex with SKAP, promotes stable microtubule-kinetochore attachments. May contribute to the regulation of separase activity. May regulate AURKA localization to mitotic spindle, but not to centrosomes and CCNB1 localization to both mitotic spindle and centrosomes. Involved in centriole duplication. Required for CDK5RAP2, CEP152, WDR62 and CEP63 centrosomal localization and promotes the centrosomal localization of CDK2. In non-mitotic cells, upon stress induction, inhibits mammalian target of rapamycin complex 1 (mTORC1) association and recruits the mTORC1 component RPTOR to stress granules (SGs), thereby preventing mTORC1 hyperactivation-induced apoptosis. May enhance GSK3B-mediated phosphorylation of other substrates, such as MAPT/TAU. The polypeptide is Sperm-associated antigen 5 (SPAG5) (Homo sapiens (Human)).